A 219-amino-acid polypeptide reads, in one-letter code: MSTVDILSPAGEKTGSVELPAEIFGVEKISIPLIHQVVVAQNAAARQGTHKTKRRGEVRGGGKKPYRQKGTGRARQGSTRAPQFAGGGVVHGPQPRDYSQRTPKKMKAAALRHALTDRARHNRIHVVTGVIEGENPSTKAARTLFGKISERKNLLLVVDRADEAAWLSARNLPQIHILEPGQLNTYDVLVSDDVVFTQAAFESFVSGPNKAVDTEGSEA.

The tract at residues 43 to 101 (AAARQGTHKTKRRGEVRGGGKKPYRQKGTGRARQGSTRAPQFAGGGVVHGPQPRDYSQR) is disordered. The span at 61 to 72 (GGKKPYRQKGTG) shows a compositional bias: basic residues.

Belongs to the universal ribosomal protein uL4 family. As to quaternary structure, part of the 50S ribosomal subunit.

In terms of biological role, one of the primary rRNA binding proteins, this protein initially binds near the 5'-end of the 23S rRNA. It is important during the early stages of 50S assembly. It makes multiple contacts with different domains of the 23S rRNA in the assembled 50S subunit and ribosome. Its function is as follows. Forms part of the polypeptide exit tunnel. The chain is Large ribosomal subunit protein uL4 from Streptomyces coelicolor (strain ATCC BAA-471 / A3(2) / M145).